The primary structure comprises 123 residues: Immunoglobulin lambda variable 5-39 (123 aa).

The signal sequence occupies residues 1-19 (MAWTPLLLLLLSHCTGSLS). The interval 20 to 44 (QPVLTQPTSLSASPGASARFTCTLR) is framework-1. Positions 21-123 (PVLTQPTSLS…YCAIWYSSTS (103 aa)) constitute an Ig-like domain. Cysteines 41 and 115 form a disulfide. Residues 45-53 (SGINVGTYR) are complementarity-determining-1. The segment at 54 to 70 (IYWYQQKPGSLPRYLLR) is framework-2. Residues 71–77 (YKSDSDK) are complementarity-determining-2. Residues 78–115 (QQGSGVPSRFSGSKDASTNAGLLLISGLQSEDEADYYC) form a framework-3 region. Residues 116–123 (AIWYSSTS) form a complementarity-determining-3 region.

As to quaternary structure, immunoglobulins are composed of two identical heavy chains and two identical light chains; disulfide-linked.

The protein resides in the secreted. It localises to the cell membrane. Its function is as follows. V region of the variable domain of immunoglobulin light chains that participates in the antigen recognition. Immunoglobulins, also known as antibodies, are membrane-bound or secreted glycoproteins produced by B lymphocytes. In the recognition phase of humoral immunity, the membrane-bound immunoglobulins serve as receptors which, upon binding of a specific antigen, trigger the clonal expansion and differentiation of B lymphocytes into immunoglobulins-secreting plasma cells. Secreted immunoglobulins mediate the effector phase of humoral immunity, which results in the elimination of bound antigens. The antigen binding site is formed by the variable domain of one heavy chain, together with that of its associated light chain. Thus, each immunoglobulin has two antigen binding sites with remarkable affinity for a particular antigen. The variable domains are assembled by a process called V-(D)-J rearrangement and can then be subjected to somatic hypermutations which, after exposure to antigen and selection, allow affinity maturation for a particular antigen. In Homo sapiens (Human), this protein is Immunoglobulin lambda variable 5-39.